A 100-amino-acid polypeptide reads, in one-letter code: Small ribosomal subunit protein bS20 (100 aa).

Over residues 1–22 (MASGKPKKKNPRLASGRKRARQ) the composition is skewed to basic residues. A disordered region spans residues 1-26 (MASGKPKKKNPRLASGRKRARQGLKL).

This sequence belongs to the bacterial ribosomal protein bS20 family.

Binds directly to 16S ribosomal RNA. This Acidovorax ebreus (strain TPSY) (Diaphorobacter sp. (strain TPSY)) protein is Small ribosomal subunit protein bS20.